The following is a 295-amino-acid chain: Cytidine deaminase (295 aa).

2 consecutive CMP/dCMP-type deaminase domains span residues Thr48–Ser168 and Glu187–Leu295. Asn89–Glu91 provides a ligand contact to substrate. Residue His102 coordinates Zn(2+). Glu104 serves as the catalytic Proton donor. Residues Cys129 and Cys132 each coordinate Zn(2+).

Belongs to the cytidine and deoxycytidylate deaminase family. As to quaternary structure, homodimer. Zn(2+) is required as a cofactor.

The enzyme catalyses cytidine + H2O + H(+) = uridine + NH4(+). It carries out the reaction 2'-deoxycytidine + H2O + H(+) = 2'-deoxyuridine + NH4(+). Its function is as follows. This enzyme scavenges exogenous and endogenous cytidine and 2'-deoxycytidine for UMP synthesis. The chain is Cytidine deaminase from Vibrio vulnificus (strain CMCP6).